The following is a 543-amino-acid chain: Cobyric acid synthase (543 aa).

A GATase cobBQ-type domain is found at 260-483 (MLDIVLVDLP…LHGVFDADGF (224 aa)). The active-site Nucleophile is Cys-346. Residue His-475 is part of the active site.

It belongs to the CobB/CobQ family. CobQ subfamily.

It participates in cofactor biosynthesis; adenosylcobalamin biosynthesis. Functionally, catalyzes amidations at positions B, D, E, and G on adenosylcobyrinic A,C-diamide. NH(2) groups are provided by glutamine, and one molecule of ATP is hydrogenolyzed for each amidation. The protein is Cobyric acid synthase of Nitratidesulfovibrio vulgaris (strain ATCC 29579 / DSM 644 / CCUG 34227 / NCIMB 8303 / VKM B-1760 / Hildenborough) (Desulfovibrio vulgaris).